A 164-amino-acid polypeptide reads, in one-letter code: S-ribosylhomocysteine lyase (164 aa).

Fe cation-binding residues include H54, H58, and C128.

Belongs to the LuxS family. In terms of assembly, homodimer. The cofactor is Fe cation.

The enzyme catalyses S-(5-deoxy-D-ribos-5-yl)-L-homocysteine = (S)-4,5-dihydroxypentane-2,3-dione + L-homocysteine. Functionally, involved in the synthesis of autoinducer 2 (AI-2) which is secreted by bacteria and is used to communicate both the cell density and the metabolic potential of the environment. The regulation of gene expression in response to changes in cell density is called quorum sensing. Catalyzes the transformation of S-ribosylhomocysteine (RHC) to homocysteine (HC) and 4,5-dihydroxy-2,3-pentadione (DPD). The sequence is that of S-ribosylhomocysteine lyase from Campylobacter jejuni subsp. jejuni serotype O:2 (strain ATCC 700819 / NCTC 11168).